Consider the following 857-residue polypeptide: Leucine--tRNA ligase (857 aa).

Residues 42-52 carry the 'HIGH' region motif; that stretch reads PYPSGRLHMGH. Residues 617-621 carry the 'KMSKS' region motif; that stretch reads KMSKS. ATP is bound at residue Lys-620.

The protein belongs to the class-I aminoacyl-tRNA synthetase family.

It localises to the cytoplasm. It catalyses the reaction tRNA(Leu) + L-leucine + ATP = L-leucyl-tRNA(Leu) + AMP + diphosphate. The sequence is that of Leucine--tRNA ligase from Vibrio vulnificus (strain CMCP6).